Here is a 237-residue protein sequence, read N- to C-terminus: Small ribosomal subunit protein uS2 (237 aa).

It belongs to the universal ribosomal protein uS2 family.

This Clostridioides difficile (strain 630) (Peptoclostridium difficile) protein is Small ribosomal subunit protein uS2.